Consider the following 555-residue polypeptide: GPI-anchor transamidase component PIGS (555 aa).

Over 2–18 (AATGAAATDLEVVRGKR) the chain is Cytoplasmic. A cardiolipin-binding residues include Arg-15 and Arg-18. The chain crosses the membrane as a helical span at residues 19–39 (AALFFATVVIVLGLPLWWKTT). Topologically, residues 40-517 (ETYRAPLPYS…LHLLYFPDDQ (478 aa)) are lumenal. Residues Asn-267 and Asn-370 are each glycosylated (N-linked (GlcNAc...) asparagine). The chain crosses the membrane as a helical span at residues 518-532 (KFAIYIPLFLPMAVP). The Cytoplasmic segment spans residues 533-555 (ILLSLFKIFLETRKSWKKPEKTD).

Belongs to the PIGS family. As to quaternary structure, heteropentamer. Part of the GPI-anchor transamidase complex, consisting of PIGK, PIGT, PIGS, PIGU and GAA1.

Its subcellular location is the endoplasmic reticulum membrane. Its pathway is glycolipid biosynthesis; glycosylphosphatidylinositol-anchor biosynthesis. Its function is as follows. Component of the glycosylphosphatidylinositol-anchor (GPI-anchor) transamidase (GPI-T) complex that catalyzes the formation of the linkage between a proprotein and a GPI-anchor and participates in GPI anchored protein biosynthesis. In Bos taurus (Bovine), this protein is GPI-anchor transamidase component PIGS.